The following is a 198-amino-acid chain: Methyl-coenzyme M reductase operon protein C (198 aa).

MCR is composed of three subunits: alpha, beta, and gamma. The function of proteins C and D is not known.

In Methanococcus vannielii, this protein is Methyl-coenzyme M reductase operon protein C (mcrC).